The following is a 329-amino-acid chain: 36 kDa antigen (329 aa).

A helical membrane pass occupies residues 11 to 31 (AILTGGGALLLGLIVLFYLAY).

It belongs to the membrane fusion protein (MFP) (TC 8.A.1) family.

Its subcellular location is the membrane. In Helicobacter pylori (strain ATCC 700392 / 26695) (Campylobacter pylori), this protein is 36 kDa antigen.